The sequence spans 150 residues: 16.9 kDa class I heat shock protein 1 (150 aa).

The important for thermostability under elevated temperature stretch occupies residues 1 to 42; the sequence is MSLVRRSNVFDPFSLDLWDPFDSVFRSVVPATSDNDTAAFAN. In terms of domain architecture, sHSP spans 36-150; sequence DTAAFANARI…PEVKAIEISG (115 aa).

Belongs to the small heat shock protein (HSP20) family. As to quaternary structure, forms oligomeric structures.

The protein localises to the cytoplasm. The protein is 16.9 kDa class I heat shock protein 1 (HSP16.9A) of Oryza sativa subsp. japonica (Rice).